The primary structure comprises 464 residues: Asparagine--tRNA ligase (464 aa).

This sequence belongs to the class-II aminoacyl-tRNA synthetase family. As to quaternary structure, homodimer.

The protein localises to the cytoplasm. It catalyses the reaction tRNA(Asn) + L-asparagine + ATP = L-asparaginyl-tRNA(Asn) + AMP + diphosphate + H(+). The chain is Asparagine--tRNA ligase from Clostridium botulinum (strain Eklund 17B / Type B).